The sequence spans 908 residues: Zinc finger and BTB domain-containing protein 41 (908 aa).

Residues T38–P59 are disordered. One can recognise a BTB domain in the interval C89 to K153. The C2H2-type 1 zinc-finger motif lies at H208–H231. Over residues R252–P261 the composition is skewed to basic residues. The disordered stretch occupies residues R252–H344. A compositionally biased stretch (acidic residues) spans T267 to D276. A compositionally biased stretch (basic and acidic residues) spans D279 to S296. The segment covering E297–A336 has biased composition (acidic residues). 13 consecutive C2H2-type zinc fingers follow at residues L360 to H382, F388 to H410, H421 to H444, W462 to H484, F490 to H513, F517 to H540, W546 to H568, H574 to H596, Y602 to H624, H630 to H653, H667 to H689, Y695 to H717, and F723 to H746.

Its subcellular location is the nucleus. Its function is as follows. May be involved in transcriptional regulation. The chain is Zinc finger and BTB domain-containing protein 41 (Zbtb41) from Mus musculus (Mouse).